The sequence spans 196 residues: Protein hunchback (196 aa).

Disordered stretches follow at residues S16–L60 and A90–A196. Residues H17–Q30 show a composition bias toward basic residues. Residues T92–P103 show a composition bias toward polar residues. Low complexity predominate over residues P125–T144. Residues A176–A196 are compositionally biased toward basic and acidic residues.

This sequence belongs to the hunchback C2H2-type zinc-finger protein family.

It is found in the nucleus. Its function is as follows. Gap class segmentation protein that controls development of head structures. The protein is Protein hunchback (hb) of Drosophila silvestris (Fruit fly).